Here is a 141-residue protein sequence, read N- to C-terminus: Nucleoside diphosphate kinase (141 aa).

ATP-binding residues include lysine 11, phenylalanine 59, arginine 87, threonine 93, arginine 104, and asparagine 114. The Pros-phosphohistidine intermediate role is filled by histidine 117.

Belongs to the NDK family. As to quaternary structure, homotetramer. It depends on Mg(2+) as a cofactor.

Its subcellular location is the cytoplasm. The catalysed reaction is a 2'-deoxyribonucleoside 5'-diphosphate + ATP = a 2'-deoxyribonucleoside 5'-triphosphate + ADP. It carries out the reaction a ribonucleoside 5'-diphosphate + ATP = a ribonucleoside 5'-triphosphate + ADP. Major role in the synthesis of nucleoside triphosphates other than ATP. The ATP gamma phosphate is transferred to the NDP beta phosphate via a ping-pong mechanism, using a phosphorylated active-site intermediate. In Histophilus somni (strain 129Pt) (Haemophilus somnus), this protein is Nucleoside diphosphate kinase.